The primary structure comprises 131 residues: ATP synthase epsilon chain (131 aa).

This sequence belongs to the ATPase epsilon chain family. F-type ATPases have 2 components, CF(1) - the catalytic core - and CF(0) - the membrane proton channel. CF(1) has five subunits: alpha(3), beta(3), gamma(1), delta(1), epsilon(1). CF(0) has three main subunits: a, b and c.

Its subcellular location is the cell membrane. In terms of biological role, produces ATP from ADP in the presence of a proton gradient across the membrane. This Bacillus pumilus (strain SAFR-032) protein is ATP synthase epsilon chain.